A 469-amino-acid chain; its full sequence is Solute carrier family 52, riboflavin transporter, member 3 (469 aa).

Topologically, residues 1–6 are cytoplasmic; it reads MALLTH. Residues 7–27 traverse the membrane as a helical segment; that stretch reads LLVCTFGMGSWVAINGLWVEL. Residues 28 to 43 are Extracellular-facing; that stretch reads PLLVTELPEGWYLPSY. Residues 44 to 64 traverse the membrane as a helical segment; sequence LTMVIQLANIGPLLVTLLHHF. The Cytoplasmic segment spans residues 65 to 71; sequence QPSCLSE. The helical transmembrane segment at 72–92 threads the bilayer; the sequence is VPIIFTVLAVGTVACALFAFL. Over 93–105 the chain is Extracellular; it reads WNVTSWVLDGRHS. N-linked (GlcNAc...) asparagine glycosylation is present at asparagine 94. The chain crosses the membrane as a helical span at residues 106–126; sequence IAFMVLTFFLALVDCTSSVTF. Residues 127–137 are Cytoplasmic-facing; it reads LPFMSRLPACY. The helical transmembrane segment at 138 to 158 threads the bilayer; that stretch reads LTTFFVGEGLSSLLPALVALA. Residues 159 to 220 lie on the Extracellular side of the membrane; it reads QGSGLTTCVN…SRYLPANFSP (62 aa). Residue asparagine 168 is glycosylated (N-linked (GlcNAc...) asparagine). A helical membrane pass occupies residues 221–241; it reads LVFFLLLSFMMACCLAAFFLL. Over 242–297 the chain is Cytoplasmic; the sequence is QRQPRPRESSIEDLLTSQVTLHSIRPREGDDLGPPDPGPSSKAQGLPEEKTASDHP. Phosphoserine is present on serine 251. The disordered stretch occupies residues 266–290; it reads RPREGDDLGPPDPGPSSKAQGLPEE. Residues 298–318 traverse the membrane as a helical segment; that stretch reads AHLAFIYVLVAFVNALTNGVL. At 319-335 the chain is on the extracellular side; that stretch reads PSVQTYSCLSYGPVAYH. The helical transmembrane segment at 336–356 threads the bilayer; it reads LSATLSSMANPLACFLSMFLP. Residues 357–361 are Cytoplasmic-facing; sequence HRSLP. The helical transmembrane segment at 362–382 threads the bilayer; sequence FLGVLTVLGTGFGAYNMAMAV. Over 383–396 the chain is Extracellular; the sequence is MSPCPLMQGHWAGE. The helical transmembrane segment at 397-417 threads the bilayer; sequence ILIVASWVLFIGCLSYVKVML. The Cytoplasmic portion of the chain corresponds to 418 to 427; sequence GVILRDRSRS. The chain crosses the membrane as a helical span at residues 428–448; the sequence is ALVWCGAAVQLGSLLGALLMF. Residues 449-469 are Extracellular-facing; sequence PLVNVLRLFSSADFCSLQCSA.

Belongs to the riboflavin transporter family.

It localises to the cell membrane. The enzyme catalyses riboflavin(in) = riboflavin(out). Its function is as follows. Plasma membrane transporter mediating the uptake by cells of the water soluble vitamin B2/riboflavin that plays a key role in biochemical oxidation-reduction reactions of the carbohydrate, lipid, and amino acid metabolism. The chain is Solute carrier family 52, riboflavin transporter, member 3 (SLC52A3) from Ailuropoda melanoleuca (Giant panda).